Reading from the N-terminus, the 125-residue chain is Large ribosomal subunit protein bL12 (125 aa).

Belongs to the bacterial ribosomal protein bL12 family. As to quaternary structure, homodimer. Part of the ribosomal stalk of the 50S ribosomal subunit. Forms a multimeric L10(L12)X complex, where L10 forms an elongated spine to which 2 to 4 L12 dimers bind in a sequential fashion. Binds GTP-bound translation factors.

In terms of biological role, forms part of the ribosomal stalk which helps the ribosome interact with GTP-bound translation factors. Is thus essential for accurate translation. The polypeptide is Large ribosomal subunit protein bL12 (Thermoanaerobacter pseudethanolicus (strain ATCC 33223 / 39E) (Clostridium thermohydrosulfuricum)).